Here is an 801-residue protein sequence, read N- to C-terminus: Cation/H(+) antiporter 28 (801 aa).

A run of 12 helical transmembrane segments spans residues Ala24 to Met44, Ser77 to Leu97, Phe113 to Leu133, Pro140 to Thr160, Ala179 to Phe199, Leu216 to Phe236, Gly252 to Pro272, Ser275 to Asn292, Ile304 to Ile324, Leu343 to Gly363, Ser371 to Ile391, and Leu403 to Ile423.

Belongs to the monovalent cation:proton antiporter 2 (CPA2) transporter (TC 2.A.37) family. CHX (TC 2.A.37.4) subfamily. In terms of tissue distribution, specifically expressed in pollen.

It localises to the membrane. Its function is as follows. May operate as a cation/H(+) antiporter. The sequence is that of Cation/H(+) antiporter 28 (CHX28) from Arabidopsis thaliana (Mouse-ear cress).